Here is a 549-residue protein sequence, read N- to C-terminus: Chaperonin GroEL 3 (549 aa).

ATP-binding positions include 29–32, 86–90, Gly-414, 477–479, and Asp-493; these read TLGP, DGTTT, and NAA.

It belongs to the chaperonin (HSP60) family. Forms a cylinder of 14 subunits composed of two heptameric rings stacked back-to-back. Interacts with the co-chaperonin GroES.

The protein localises to the cytoplasm. It catalyses the reaction ATP + H2O + a folded polypeptide = ADP + phosphate + an unfolded polypeptide.. Functionally, together with its co-chaperonin GroES, plays an essential role in assisting protein folding. The GroEL-GroES system forms a nano-cage that allows encapsulation of the non-native substrate proteins and provides a physical environment optimized to promote and accelerate protein folding. The sequence is that of Chaperonin GroEL 3 from Frankia casuarinae (strain DSM 45818 / CECT 9043 / HFP020203 / CcI3).